The primary structure comprises 146 residues: 3-hydroxyacyl-[acyl-carrier-protein] dehydratase FabZ (146 aa).

The active site involves His49.

The protein belongs to the thioester dehydratase family. FabZ subfamily.

The protein localises to the cytoplasm. It catalyses the reaction a (3R)-hydroxyacyl-[ACP] = a (2E)-enoyl-[ACP] + H2O. In terms of biological role, involved in unsaturated fatty acids biosynthesis. Catalyzes the dehydration of short chain beta-hydroxyacyl-ACPs and long chain saturated and unsaturated beta-hydroxyacyl-ACPs. The polypeptide is 3-hydroxyacyl-[acyl-carrier-protein] dehydratase FabZ (Wolbachia sp. subsp. Brugia malayi (strain TRS)).